Reading from the N-terminus, the 354-residue chain is Protein RecA (354 aa).

An ATP-binding site is contributed by 67–74 (GPESSGKT).

It belongs to the RecA family.

The protein resides in the cytoplasm. Its function is as follows. Can catalyze the hydrolysis of ATP in the presence of single-stranded DNA, the ATP-dependent uptake of single-stranded DNA by duplex DNA, and the ATP-dependent hybridization of homologous single-stranded DNAs. It interacts with LexA causing its activation and leading to its autocatalytic cleavage. This is Protein RecA from Serratia marcescens.